Here is a 469-residue protein sequence, read N- to C-terminus: Chromosomal replication initiator protein DnaA (469 aa).

Positions 1–83 (MSEWDYKIFW…KKISIDFIIK (83 aa)) are domain I, interacts with DnaA modulators. A domain II region spans residues 83-128 (KPNTSEDLSKAENEGGNDKKEDAAKPSSAESKKKSVKTEGGRGQHP). The tract at residues 89–131 (DLSKAENEGGNDKKEDAAKPSSAESKKKSVKTEGGRGQHPDLR) is disordered. Residues 129-344 (DLRPEYNFED…AALTKLIAYT (216 aa)) are domain III, AAA+ region. ATP-binding residues include Gly-173, Gly-175, Lys-176, and Thr-177. Positions 345 to 469 (ELTKKTMDEA…RNTIKENTNK (125 aa)) are domain IV, binds dsDNA.

This sequence belongs to the DnaA family. Oligomerizes as a right-handed, spiral filament on DNA at oriC.

Its subcellular location is the cytoplasm. Its function is as follows. Plays an essential role in the initiation and regulation of chromosomal replication. ATP-DnaA binds to the origin of replication (oriC) to initiate formation of the DNA replication initiation complex once per cell cycle. Binds the DnaA box (a 9 base pair repeat at the origin) and separates the double-stranded (ds)DNA. Forms a right-handed helical filament on oriC DNA; dsDNA binds to the exterior of the filament while single-stranded (ss)DNA is stabiized in the filament's interior. The ATP-DnaA-oriC complex binds and stabilizes one strand of the AT-rich DNA unwinding element (DUE), permitting loading of DNA polymerase. After initiation quickly degrades to an ADP-DnaA complex that is not apt for DNA replication. Binds acidic phospholipids. This Treponema denticola (strain ATCC 35405 / DSM 14222 / CIP 103919 / JCM 8153 / KCTC 15104) protein is Chromosomal replication initiator protein DnaA.